The primary structure comprises 238 residues: Ribosomal RNA small subunit methyltransferase G (238 aa).

Residues Gly106, Leu111, 157–158, and Arg170 each bind S-adenosyl-L-methionine; that span reads IE.

This sequence belongs to the methyltransferase superfamily. RNA methyltransferase RsmG family.

The protein resides in the cytoplasm. It carries out the reaction guanosine(527) in 16S rRNA + S-adenosyl-L-methionine = N(7)-methylguanosine(527) in 16S rRNA + S-adenosyl-L-homocysteine. Functionally, specifically methylates the N7 position of guanine in position 527 of 16S rRNA. This Psychrobacter cryohalolentis (strain ATCC BAA-1226 / DSM 17306 / VKM B-2378 / K5) protein is Ribosomal RNA small subunit methyltransferase G.